Reading from the N-terminus, the 139-residue chain is Class I hydrophobin 1 (139 aa).

An N-terminal signal peptide occupies residues 1-21 (MFFRISTVFVVALAAFAAASP). 4 disulfide bridges follow: Cys57/Cys118, Cys64/Cys112, Cys65/Cys98, and Cys119/Cys132.

This sequence belongs to the fungal hydrophobin family. Self-assembles to form functional amyloid fibrils called rodlets. Self-assembly into fibrillar rodlets occurs spontaneously at hydrophobic:hydrophilic interfaces and the rodlets further associate laterally to form amphipathic monolayers.

The protein localises to the secreted. Its subcellular location is the cell wall. Functionally, aerial growth, conidiation, and dispersal of filamentous fungi in the environment rely upon a capability of their secreting small amphipathic proteins called hydrophobins (HPBs) with low sequence identity. Class I can self-assemble into an outermost layer of rodlet bundles on aerial cell surfaces, conferring cellular hydrophobicity that supports fungal growth, development and dispersal; whereas Class II form highly ordered films at water-air interfaces through intermolecular interactions but contribute nothing to the rodlet structure. Hah1 is a class I hydrophobin that is involved in aerial growth of mycelia, but does not play a role in pathogenesis. The sequence is that of Class I hydrophobin 1 from Heterobasidion annosum (Root rot fungus).